A 148-amino-acid polypeptide reads, in one-letter code: MADTMQFDLVSPERNLVSVPVREVRLPGADGDLTAMPGHAPAIVNLRPGLVTVVAGDGSETEFAVTGGFAEINNESVTLLAERGHPRAEMTQEVFNEMMAQARRRVEAAKERESAGEELVAAAVKLLADMEALGTHIGLDPNHANFPH.

The protein belongs to the ATPase epsilon chain family. F-type ATPases have 2 components, CF(1) - the catalytic core - and CF(0) - the membrane proton channel. CF(1) has five subunits: alpha(3), beta(3), gamma(1), delta(1), epsilon(1). CF(0) has three main subunits: a, b and c.

The protein localises to the cell inner membrane. Its function is as follows. Produces ATP from ADP in the presence of a proton gradient across the membrane. This chain is ATP synthase epsilon chain, found in Paracoccus denitrificans (strain Pd 1222).